The sequence spans 308 residues: uncharacterized protein (308 aa).

The segment covering 43–55 (SQYGTWADQHQNG) has biased composition (polar residues). The interval 43-289 (SQYGTWADQH…KEERSEECSP (247 aa)) is disordered. S62 carries the phosphoserine modification. Residues 80 to 90 (HLSSYTESTSV) show a composition bias toward polar residues. Over residues 91-109 (EQRDSSRDRRSSSVDRSSS) the composition is skewed to basic and acidic residues. The segment covering 136 to 152 (IHQTSVLDSSALKTRVQ) has biased composition (polar residues). Over residues 153–168 (LSKRSRRRAPISHSLR) the composition is skewed to basic residues. S166 is subject to Phosphoserine. Basic and acidic residues-rich tracts occupy residues 175–186 (SESRSPLEEESH) and 193–216 (DSTEEKSPRRDESDEEPPRVERTP). Residues S205, S259, S262, and S288 each carry the phosphoserine modification.

This is an uncharacterized protein from Mus musculus (Mouse).